Reading from the N-terminus, the 30-residue chain is Cycloviolacin-O18 (30 aa).

The segment at residues 1-30 (GIPCGESCVYIPCTVTALAGCKCKSKVCYN) is a cross-link (cyclopeptide (Gly-Asn)). 3 disulfide bridges follow: C4–C21, C8–C23, and C13–C28.

Post-translationally, this is a cyclic peptide. In terms of tissue distribution, expressed in leaves, petals and petioles but not in roots and runners (at protein level).

Its function is as follows. Probably participates in a plant defense mechanism. This is Cycloviolacin-O18 from Viola odorata (Sweet violet).